A 397-amino-acid chain; its full sequence is Elongation factor Tu (397 aa).

The 197-residue stretch at Lys10–Glu206 folds into the tr-type G domain. Residues Gly19–Thr26 are G1. Residue Gly19 to Thr26 participates in GTP binding. Residue Thr26 participates in Mg(2+) binding. Positions Gly60 to Asn64 are G2. Positions Asp81–Gly84 are G3. Residues Asp81–His85 and Asn136–Asp139 each bind GTP. The interval Asn136–Asp139 is G4. Residues Ser174–Leu176 form a G5 region.

Belongs to the TRAFAC class translation factor GTPase superfamily. Classic translation factor GTPase family. EF-Tu/EF-1A subfamily. In terms of assembly, monomer.

It is found in the cytoplasm. The enzyme catalyses GTP + H2O = GDP + phosphate + H(+). GTP hydrolase that promotes the GTP-dependent binding of aminoacyl-tRNA to the A-site of ribosomes during protein biosynthesis. This Clostridium perfringens (strain ATCC 13124 / DSM 756 / JCM 1290 / NCIMB 6125 / NCTC 8237 / Type A) protein is Elongation factor Tu.